Reading from the N-terminus, the 278-residue chain is Tropomyosin A (278 aa).

Positions isoleucine 1 to threonine 270 form a coiled coil. Residues aspartate 92–arginine 134 form a disordered region. Residues glutamine 95–serine 104 are compositionally biased toward polar residues. Residues threonine 105–arginine 134 are compositionally biased toward basic and acidic residues.

The protein belongs to the tropomyosin family. Homodimer.

In terms of biological role, tropomyosin, in association with the troponin complex, plays a central role in the calcium dependent regulation of muscle contraction. In Echinococcus granulosus (Hydatid tapeworm), this protein is Tropomyosin A.